The primary structure comprises 165 residues: Protein SprT (165 aa).

A SprT-like domain is found at 20–163 (EKLAQANLKL…RCVHCGEQLV (144 aa)). Residue histidine 78 participates in Zn(2+) binding. Residue glutamate 79 is part of the active site. Residue histidine 82 participates in Zn(2+) binding.

The protein belongs to the SprT family. Zn(2+) is required as a cofactor.

It is found in the cytoplasm. This is Protein SprT from Escherichia coli (strain K12 / MC4100 / BW2952).